Here is a 66-residue protein sequence, read N- to C-terminus: Large ribosomal subunit protein bL35 (66 aa).

This sequence belongs to the bacterial ribosomal protein bL35 family.

The polypeptide is Large ribosomal subunit protein bL35 (Brucella anthropi (strain ATCC 49188 / DSM 6882 / CCUG 24695 / JCM 21032 / LMG 3331 / NBRC 15819 / NCTC 12168 / Alc 37) (Ochrobactrum anthropi)).